The primary structure comprises 196 residues: Imidazole glycerol phosphate synthase subunit HisH (196 aa).

Residues lysine 2–leucine 196 form the Glutamine amidotransferase type-1 domain. The Nucleophile role is filled by cysteine 77. Residues histidine 178 and glutamate 180 contribute to the active site.

As to quaternary structure, heterodimer of HisH and HisF.

The protein localises to the cytoplasm. The catalysed reaction is 5-[(5-phospho-1-deoxy-D-ribulos-1-ylimino)methylamino]-1-(5-phospho-beta-D-ribosyl)imidazole-4-carboxamide + L-glutamine = D-erythro-1-(imidazol-4-yl)glycerol 3-phosphate + 5-amino-1-(5-phospho-beta-D-ribosyl)imidazole-4-carboxamide + L-glutamate + H(+). The enzyme catalyses L-glutamine + H2O = L-glutamate + NH4(+). The protein operates within amino-acid biosynthesis; L-histidine biosynthesis; L-histidine from 5-phospho-alpha-D-ribose 1-diphosphate: step 5/9. IGPS catalyzes the conversion of PRFAR and glutamine to IGP, AICAR and glutamate. The HisH subunit catalyzes the hydrolysis of glutamine to glutamate and ammonia as part of the synthesis of IGP and AICAR. The resulting ammonia molecule is channeled to the active site of HisF. The protein is Imidazole glycerol phosphate synthase subunit HisH of Bacteroides thetaiotaomicron (strain ATCC 29148 / DSM 2079 / JCM 5827 / CCUG 10774 / NCTC 10582 / VPI-5482 / E50).